The following is a 442-amino-acid chain: 3-phosphoshikimate 1-carboxyvinyltransferase (442 aa).

K23, S24, and R28 together coordinate 3-phosphoshikimate. K23 serves as a coordination point for phosphoenolpyruvate. G95 and R123 together coordinate phosphoenolpyruvate. Residues S167, Q169, D315, and K342 each coordinate 3-phosphoshikimate. Q169 serves as a coordination point for phosphoenolpyruvate. D315 (proton acceptor) is an active-site residue. The phosphoenolpyruvate site is built by R346 and R390.

This sequence belongs to the EPSP synthase family. Monomer.

The protein localises to the cytoplasm. The enzyme catalyses 3-phosphoshikimate + phosphoenolpyruvate = 5-O-(1-carboxyvinyl)-3-phosphoshikimate + phosphate. Its pathway is metabolic intermediate biosynthesis; chorismate biosynthesis; chorismate from D-erythrose 4-phosphate and phosphoenolpyruvate: step 6/7. Functionally, catalyzes the transfer of the enolpyruvyl moiety of phosphoenolpyruvate (PEP) to the 5-hydroxyl of shikimate-3-phosphate (S3P) to produce enolpyruvyl shikimate-3-phosphate and inorganic phosphate. The sequence is that of 3-phosphoshikimate 1-carboxyvinyltransferase from Dichelobacter nodosus (strain VCS1703A).